A 408-amino-acid polypeptide reads, in one-letter code: Glutamate N-acetyltransferase (408 aa).

Residues Thr-150, Lys-176, Thr-189, Glu-271, Asn-403, and Thr-408 each contribute to the substrate site. The Nucleophile role is filled by Thr-189.

Belongs to the ArgJ family. Heterotetramer of two alpha and two beta chains.

It is found in the cytoplasm. The enzyme catalyses N(2)-acetyl-L-ornithine + L-glutamate = N-acetyl-L-glutamate + L-ornithine. The protein operates within amino-acid biosynthesis; L-arginine biosynthesis; L-ornithine and N-acetyl-L-glutamate from L-glutamate and N(2)-acetyl-L-ornithine (cyclic): step 1/1. Functionally, catalyzes the transfer of the acetyl group from N(2)-acetylornithine to glutamate, forming N-acetylglutamate and L-ornithine. This chain is Glutamate N-acetyltransferase, found in Methanococcus vannielii (strain ATCC 35089 / DSM 1224 / JCM 13029 / OCM 148 / SB).